Consider the following 371-residue polypeptide: Glutamate 5-kinase (371 aa).

Lys12 serves as a coordination point for ATP. Residues Ser52, Asp136, and Asn148 each coordinate substrate. ATP contacts are provided by residues 168–169 (SD) and 210–216 (TGGMRTK). Residues 275–354 (QGEILVDEGA…EDIAEKFGYS (80 aa)) form the PUA domain.

It belongs to the glutamate 5-kinase family.

The protein resides in the cytoplasm. The enzyme catalyses L-glutamate + ATP = L-glutamyl 5-phosphate + ADP. The protein operates within amino-acid biosynthesis; L-proline biosynthesis; L-glutamate 5-semialdehyde from L-glutamate: step 1/2. In terms of biological role, catalyzes the transfer of a phosphate group to glutamate to form L-glutamate 5-phosphate. This chain is Glutamate 5-kinase, found in Idiomarina loihiensis (strain ATCC BAA-735 / DSM 15497 / L2-TR).